The chain runs to 451 residues: MLLRVAWRRASLAATSVALRRSSVPTRGLRLRVVDHAPHSAVPSEAEAVLRPLYMDVRATTPLDPRVLDAMLPYLVNYYGNPHSRTHAYGWESEAAMERARQQVASLIGADPREIIFTSGATESNNIAIKGVARFYRSRKKHLVTTQTEHKCVLDSCRSLEAEGFRVTYLPVQKSGIIDLKELEAAIQPDTSLVSVMTVNNEIGVKQPIAEIGQICSSRKLYFHTDAAQAVGKIPLDVNDMKIDLMSISGHKLYGPKGVGAIYIRRRPRVRVEALQSGGGQERGMRSGTVPTPLVVGLGAACELAQQEMEYDHKRISKLAERLIQKIMKNLPDVVMNGDPKQHYPGCINLSFAYVEGESLLMALKDVALSSGSACTSASLEPSYVLRAIGTDEDLAHSSIRFGIGRFTTEEEVDYTVQKCIHHVKRLREMSPLWEMVQDGIDLKSIKWTQH.

Residues A121, T122, Q229, S249, and H251 each contribute to the pyridoxal 5'-phosphate site. K252 bears the N6-(pyridoxal phosphate)lysine mark. T289 provides a ligand contact to pyridoxal 5'-phosphate. C375 acts as the Cysteine persulfide intermediate in catalysis. Residue C375 participates in [2Fe-2S] cluster binding. C375 provides a ligand contact to Zn(2+). Cysteine persulfide is present on C375.

Belongs to the class-V pyridoxal-phosphate-dependent aminotransferase family. NifS/IscS subfamily. As to quaternary structure, homodimer. Component of the mitochondrial core iron-sulfur cluster (ISC) complex composed of NFS1, LYRM4, NDUFAB1, ISCU, FXN, and FDX2; this complex is a heterohexamer containing two copies of each monomer. Component of cyteine desulfurase complex composed of NFS1, LYRM4 and NDUFAB1; this complex contributes to the activation of cysteine desulfurase activity and NFS1 stabilization. Interacts (homodimer form) with ISCU (D-state); each monomer interacts with the C-terminal regions of each NFS1 monomer. Interacts with HSPA9. Interacts (via homodimer form) with FDX2. Interacts (via homodimer form) with FXN. Interacts with LYRM4. Component of a complex composed of FXN, NFS1, LYRM4 and ISCU. In terms of assembly, monomer. Homodimer. Oligomer. Interacts with ISCU. Component of the cysteine desulfurase complex composed of NFS1 and LYRM4; this complex contributes to the activation of cysteine desulfurase activity. Interacts with MOCS3. Pyridoxal 5'-phosphate serves as cofactor. In terms of processing, N-gluconoylated. Post-translationally, cysteine persulfide intermediate is reduced by thiol-containing molecules like glutathione and L-cysteine. Persulfide reduction is a rate-limiting step of cysteine desulfurase catalytic cycle.

It localises to the mitochondrion. It is found in the cytoplasm. Its subcellular location is the nucleus. The protein localises to the cytoskeleton. The protein resides in the microtubule organizing center. It localises to the centrosome. It catalyses the reaction (sulfur carrier)-H + L-cysteine = (sulfur carrier)-SH + L-alanine. The enzyme catalyses L-cysteinyl-[cysteine desulfurase] + L-cysteine = S-sulfanyl-L-cysteinyl-[cysteine desulfurase] + L-alanine. Its activity is regulated as follows. Active only in complex with LYRM4. In terms of biological role, cysteine desulfurase, of the core iron-sulfur cluster (ISC) assembly complex, that catalyzes the desulfuration of L-cysteine to L-alanine, as component of the cysteine desulfurase complex leading to the formation of a cysteine persulfide intermediate at the active site cysteine residue and participates in the [2Fe-2S] clusters assembly on the scaffolding protein ISCU. The persulfide is then transferred on the flexible Cys loop from the catalytic site of NFS1 to the surface of NFS1. After the NFS1-linked persulfide sulfur is transferred to one of the conserved Cys residues of the scaffold, a reaction assisted by FXN. The core iron-sulfur cluster (ISC) assembly complex is involved in the de novo synthesis of a [2Fe-2S] cluster, the first step of the mitochondrial iron-sulfur protein biogenesis. This process is initiated by the cysteine desulfurase complex (NFS1:LYRM4:NDUFAB1) that produces persulfide which is delivered on the scaffold protein ISCU in a FXN-dependent manner. Then this complex is stabilized by FDX2 which provides reducing equivalents to accomplish the [2Fe-2S] cluster assembly. Finally, the [2Fe-2S] cluster is transferred from ISCU to chaperone proteins, including HSCB, HSPA9 and GLRX5. Its function is as follows. May catalyze the desulfuration of L-cysteine to L-alanine as component of the cysteine desulfurase complex (NFS1:LYRM4), leading to the formation of a cysteine persulfide intermediate. Acts as a sulfur donor for MOCS3 by transferring the sulfur of the cysteine persulfide intermediate on MOCS3. This chain is Cysteine desulfurase, found in Rattus norvegicus (Rat).